The primary structure comprises 429 residues: MNQNVVIIGTQWGDEGKGKIVDWLTERCQAVVRFQGGHNAGHTLVIGARKTILHLIPSGILRADVSCFIGNGVVLDPLALFSELDELRPVVPDAQERLFISDACPLILPYHKSLDRAREQAMGAAKIGTTGRGIGPAYEDKVRRRALRVADLFHRERFAAKLAEALDYHNFVLQHYFKREPENFHAILEQYLELADGLAPMVVDVSVRLARLQAEGARILFEGAQGTLLDVDHGTYPFVTSSNTVAGGASAGSGVGPADLGYVLGITKAYTTRVGAGPFPTELFDETGVFLAERGAEVGATTGRARRCGWFDAVALRAACRVNGVTGLCITKLDVLDGLAEIRVAVGYRVNGVVQEELPGGAEALAACEPIYESFPGWSESTAGVRHWADLPQAARCYLEAIAERAERPLAIISTGPDRDDTILRTEIL.

GTP contacts are provided by residues G13 to K19 and G41 to T43. D14 acts as the Proton acceptor in catalysis. Mg(2+)-binding residues include D14 and G41. Residues D14–K17, N39–H42, T130, R144, Q225, T240, and R304 contribute to the IMP site. H42 acts as the Proton donor in catalysis. A300–R306 is a substrate binding site. GTP contacts are provided by residues R306, K332–D334, and S414–G416.

The protein belongs to the adenylosuccinate synthetase family. Homodimer. Requires Mg(2+) as cofactor.

Its subcellular location is the cytoplasm. The catalysed reaction is IMP + L-aspartate + GTP = N(6)-(1,2-dicarboxyethyl)-AMP + GDP + phosphate + 2 H(+). It participates in purine metabolism; AMP biosynthesis via de novo pathway; AMP from IMP: step 1/2. In terms of biological role, plays an important role in the de novo pathway of purine nucleotide biosynthesis. Catalyzes the first committed step in the biosynthesis of AMP from IMP. The protein is Adenylosuccinate synthetase of Acidithiobacillus ferrooxidans (Thiobacillus ferrooxidans).